A 458-amino-acid chain; its full sequence is tRNA modification GTPase MnmE (458 aa).

Positions 26, 88, and 127 each coordinate (6S)-5-formyl-5,6,7,8-tetrahydrofolate. The region spanning 224–378 (GLSTAIIGRP…IEDRINQLFF (155 aa)) is the TrmE-type G domain. A K(+)-binding site is contributed by N234. Residues 234–239 (NVGKSS), 253–259 (TDIAGTT), and 278–281 (DTAG) each bind GTP. S238 is a Mg(2+) binding site. K(+) contacts are provided by T253, I255, and T258. T259 contacts Mg(2+). K458 serves as a coordination point for (6S)-5-formyl-5,6,7,8-tetrahydrofolate.

The protein belongs to the TRAFAC class TrmE-Era-EngA-EngB-Septin-like GTPase superfamily. TrmE GTPase family. As to quaternary structure, homodimer. Heterotetramer of two MnmE and two MnmG subunits. K(+) is required as a cofactor.

The protein resides in the cytoplasm. Functionally, exhibits a very high intrinsic GTPase hydrolysis rate. Involved in the addition of a carboxymethylaminomethyl (cmnm) group at the wobble position (U34) of certain tRNAs, forming tRNA-cmnm(5)s(2)U34. This Streptococcus pyogenes serotype M18 (strain MGAS8232) protein is tRNA modification GTPase MnmE.